A 123-amino-acid chain; its full sequence is Large ribosomal subunit protein bL21 (123 aa).

This sequence belongs to the bacterial ribosomal protein bL21 family. In terms of assembly, part of the 50S ribosomal subunit. Contacts protein L20.

Its function is as follows. This protein binds to 23S rRNA in the presence of protein L20. This Rippkaea orientalis (strain PCC 8801 / RF-1) (Cyanothece sp. (strain PCC 8801)) protein is Large ribosomal subunit protein bL21.